The primary structure comprises 533 residues: Chromosomal replication initiator protein DnaA (533 aa).

Residues 1–72 (MNDFWQHCSA…DLARDFWNAP (72 aa)) are domain I, interacts with DnaA modulators. A domain II region spans residues 72–196 (PIEVQFVLDP…EAADSMYERS (125 aa)). Residues 83–113 (AGQRSPAGATPLAPRAPLPSANPAPVAPGPA) are disordered. The segment covering 96-110 (PRAPLPSANPAPVAP) has biased composition (pro residues). Residues 197-413 (KLNPVLTFDN…GALRKILAYS (217 aa)) form a domain III, AAA+ region region. Residues glycine 241, glycine 243, lysine 244, and threonine 245 each coordinate ATP. Positions 414–533 (KFHGREITIE…LHVLEQTLKG (120 aa)) are domain IV, binds dsDNA.

The protein belongs to the DnaA family. In terms of assembly, oligomerizes as a right-handed, spiral filament on DNA at oriC.

It localises to the cytoplasm. Plays an essential role in the initiation and regulation of chromosomal replication. ATP-DnaA binds to the origin of replication (oriC) to initiate formation of the DNA replication initiation complex once per cell cycle. Binds the DnaA box (a 9 base pair repeat at the origin) and separates the double-stranded (ds)DNA. Forms a right-handed helical filament on oriC DNA; dsDNA binds to the exterior of the filament while single-stranded (ss)DNA is stabiized in the filament's interior. The ATP-DnaA-oriC complex binds and stabilizes one strand of the AT-rich DNA unwinding element (DUE), permitting loading of DNA polymerase. After initiation quickly degrades to an ADP-DnaA complex that is not apt for DNA replication. Binds acidic phospholipids. The sequence is that of Chromosomal replication initiator protein DnaA from Burkholderia mallei (strain SAVP1).